A 293-amino-acid polypeptide reads, in one-letter code: MSGLGRSRRGGRSRVDQEERFPQGLWTGVAMRSCPEEQYWDPLLGTCMSCKTICNHQSQRTCAAFCRSLSCRKEQGKFYDHLLRDCISCASICGQHPKQCAYFCENKLRSPVNLPPELRRQRSGEVENNSDNSGRYQGLEHRGSEASPALPGLKLSADQVALVYSTLGLCLCAVLCCFLVAVACFLKKRGDPCSCQPRSRPRQSPAKSSQDHAMEAGSPVSTSPEPVETCSFCFPECRAPTQESAVTPGTPDPTCAGRWGCHTRTTVLQPCPHIPDSGLGIVCVPAQEGGPGA.

Residues 1–165 (MSGLGRSRRG…SADQVALVYS (165 aa)) are Extracellular-facing. TNFR-Cys repeat units follow at residues 33–67 (SCPE…AFCR) and 70–104 (SCRK…AYFC). Disulfide bonds link C34–C47, C50–C62, C54–C66, C71–C86, C89–C100, and C93–C104. Positions 115–146 (PPELRRQRSGEVENNSDNSGRYQGLEHRGSEA) are disordered. The segment covering 126–135 (VENNSDNSGR) has biased composition (polar residues). N128 carries N-linked (GlcNAc...) asparagine glycosylation. The chain crosses the membrane as a helical; Signal-anchor for type III membrane protein span at residues 166-186 (TLGLCLCAVLCCFLVAVACFL). At 187 to 293 (KKRGDPCSCQ…VPAQEGGPGA (107 aa)) the chain is on the cytoplasmic side. Residues 192 to 226 (PCSCQPRSRPRQSPAKSSQDHAMEAGSPVSTSPEP) are disordered.

In terms of assembly, binds TRAF2, TRAF5 and TRAF6. Binds the NH2-terminal domain of CAMLG with its C-terminus. Highly expressed in spleen, thymus, small intestine and peripheral blood leukocytes. Expressed in resting B-cells and activated T-cells, but not in resting T-cells.

It is found in the membrane. In terms of biological role, receptor for TNFSF13/APRIL and TNFSF13B/TALL1/BAFF/BLYS that binds both ligands with similar high affinity. Mediates calcineurin-dependent activation of NF-AT, as well as activation of NF-kappa-B and AP-1. Involved in the stimulation of B- and T-cell function and the regulation of humoral immunity. The chain is Tumor necrosis factor receptor superfamily member 13B (TNFRSF13B) from Homo sapiens (Human).